Reading from the N-terminus, the 197-residue chain is MTGDRRDEYYWKAKKEQLRSRAAFKLEFLLDRYRVVRKGDAVIEIGSSPGGWTQVLNSLARKIISIDLQEMEEIAGVRFIRCDIFKETIFDDIDRALREEGIEKVDDVVSDAMAKVSGIPSRDHAVSYQIGQRVMEIAVRYLRNGGNVLLKQFQGDMTNDFIAIWRKNFSSYKISKPPASRGSSSEIYIMFFGFKAP.

Gly50, Trp52, Asp67, Asp83, and Asp111 together coordinate S-adenosyl-L-methionine. The Proton acceptor role is filled by Lys151.

The protein belongs to the class I-like SAM-binding methyltransferase superfamily. RNA methyltransferase RlmE family.

It is found in the cytoplasm. It catalyses the reaction uridine(2552) in 23S rRNA + S-adenosyl-L-methionine = 2'-O-methyluridine(2552) in 23S rRNA + S-adenosyl-L-homocysteine + H(+). Functionally, specifically methylates the uridine in position 2552 of 23S rRNA at the 2'-O position of the ribose in the fully assembled 50S ribosomal subunit. This Thermoplasma volcanium (strain ATCC 51530 / DSM 4299 / JCM 9571 / NBRC 15438 / GSS1) protein is Ribosomal RNA large subunit methyltransferase E.